A 357-amino-acid polypeptide reads, in one-letter code: NADH-quinone oxidoreductase subunit H (357 aa).

The next 8 helical transmembrane spans lie at 18–38 (VAWM…PIIL), 92–112 (VLFV…WAVV), 127–147 (LLYI…AGWA), 165–185 (VSYE…SGSL), 206–226 (FLSW…ISAV), 268–288 (ILLS…PIDI), 294–314 (IPGW…FVWF), and 329–349 (LGWK…AIWM).

The protein belongs to the complex I subunit 1 family. In terms of assembly, NDH-1 is composed of 14 different subunits. Subunits NuoA, H, J, K, L, M, N constitute the membrane sector of the complex.

The protein resides in the cell inner membrane. The catalysed reaction is a quinone + NADH + 5 H(+)(in) = a quinol + NAD(+) + 4 H(+)(out). NDH-1 shuttles electrons from NADH, via FMN and iron-sulfur (Fe-S) centers, to quinones in the respiratory chain. The immediate electron acceptor for the enzyme in this species is believed to be ubiquinone. Couples the redox reaction to proton translocation (for every two electrons transferred, four hydrogen ions are translocated across the cytoplasmic membrane), and thus conserves the redox energy in a proton gradient. This subunit may bind ubiquinone. The polypeptide is NADH-quinone oxidoreductase subunit H (Bordetella bronchiseptica (strain ATCC BAA-588 / NCTC 13252 / RB50) (Alcaligenes bronchisepticus)).